A 355-amino-acid polypeptide reads, in one-letter code: Uroporphyrinogen decarboxylase (355 aa).

Residues 27 to 31 (RQAGR), D78, Y155, S210, and H328 contribute to the substrate site.

It belongs to the uroporphyrinogen decarboxylase family. Homodimer.

It is found in the cytoplasm. It carries out the reaction uroporphyrinogen III + 4 H(+) = coproporphyrinogen III + 4 CO2. It participates in porphyrin-containing compound metabolism; protoporphyrin-IX biosynthesis; coproporphyrinogen-III from 5-aminolevulinate: step 4/4. Functionally, catalyzes the decarboxylation of four acetate groups of uroporphyrinogen-III to yield coproporphyrinogen-III. This Pseudomonas fluorescens (strain ATCC BAA-477 / NRRL B-23932 / Pf-5) protein is Uroporphyrinogen decarboxylase.